Reading from the N-terminus, the 701-residue chain is Elongation factor G (701 aa).

A tr-type G domain is found at 6-286; the sequence is KFTRNIGIAA…YVMELLPSPL (281 aa). Residues 15-22, 83-87, and 137-140 contribute to the GTP site; these read AHIDAGKT, DTPGH, and NKMD.

Belongs to the TRAFAC class translation factor GTPase superfamily. Classic translation factor GTPase family. EF-G/EF-2 subfamily.

The protein resides in the cytoplasm. Functionally, catalyzes the GTP-dependent ribosomal translocation step during translation elongation. During this step, the ribosome changes from the pre-translocational (PRE) to the post-translocational (POST) state as the newly formed A-site-bound peptidyl-tRNA and P-site-bound deacylated tRNA move to the P and E sites, respectively. Catalyzes the coordinated movement of the two tRNA molecules, the mRNA and conformational changes in the ribosome. This chain is Elongation factor G, found in Cytophaga hutchinsonii (strain ATCC 33406 / DSM 1761 / CIP 103989 / NBRC 15051 / NCIMB 9469 / D465).